Here is a 1095-residue protein sequence, read N- to C-terminus: Formin-like protein 2 (1095 aa).

The GBD/FH3 domain maps to 23–469; sequence LPMPEPGELE…EAIQRQSTLE (447 aa). Residues 381-478 are a coiled coil; that stretch reads LLEDAETKNA…EKKIHELEKQ (98 aa). The disordered stretch occupies residues 521–602; the sequence is PSSGPLPPPP…PSAPPLPGTS (82 aa). Composition is skewed to pro residues over residues 524–534, 548–576, and 583–599; these read GPLPPPPPPLP, ATPP…PLPG, and PAPP…PPLP. Residues 617 to 1008 form the FH2 domain; sequence IKKPIKTKFR…LMEKLLEQEA (392 aa).

Belongs to the formin homology family. As to quaternary structure, interacts with TCP11L2; this interaction promotes muscle-derived satellite cell (MDSC) migration and differentiation.

The protein localises to the cytoplasm. Plays a role in the regulation of cell morphology and cytoskeletal organization. Required in the cortical actin filament dynamics. The sequence is that of Formin-like protein 2 from Bos taurus (Bovine).